The primary structure comprises 306 residues: Pantothenate kinase (306 aa).

91-98 (GSVAVGKS) provides a ligand contact to ATP.

Belongs to the prokaryotic pantothenate kinase family.

It localises to the cytoplasm. The enzyme catalyses (R)-pantothenate + ATP = (R)-4'-phosphopantothenate + ADP + H(+). It participates in cofactor biosynthesis; coenzyme A biosynthesis; CoA from (R)-pantothenate: step 1/5. The protein is Pantothenate kinase of Streptococcus thermophilus (strain ATCC BAA-491 / LMD-9).